Consider the following 385-residue polypeptide: Lysine 6-dehydrogenase (385 aa).

Belongs to the saccharopine dehydrogenase family. In terms of assembly, homohexamer.

It catalyses the reaction L-lysine + NAD(+) = L-1-piperideine-6-carboxylate + NH4(+) + NADH + 2 H(+). Functionally, catalyzes the oxidative deamination of L-lysine in the presence of NAD. Can also use (S)-(2-aminoethyl)-L-cysteine as a substrate, but more slowly. Can use both NAD and NADP but the preferred substrate is NAD. This chain is Lysine 6-dehydrogenase (lysDH), found in Geobacillus stearothermophilus (Bacillus stearothermophilus).